A 145-amino-acid chain; its full sequence is ATP synthase epsilon chain (145 aa).

This sequence belongs to the ATPase epsilon chain family. F-type ATPases have 2 components, CF(1) - the catalytic core - and CF(0) - the membrane proton channel. CF(1) has five subunits: alpha(3), beta(3), gamma(1), delta(1), epsilon(1). CF(0) has three main subunits: a, b and c.

The protein localises to the cell inner membrane. Its function is as follows. Produces ATP from ADP in the presence of a proton gradient across the membrane. In Francisella tularensis subsp. tularensis (strain FSC 198), this protein is ATP synthase epsilon chain.